The sequence spans 353 residues: Photosystem II D2 protein (353 aa).

Residue threonine 2 is modified to N-acetylthreonine. The residue at position 2 (threonine 2) is a Phosphothreonine. A helical membrane pass occupies residues 41 to 61; sequence CAYFALGGWFTGTTFVTSWYT. Histidine 118 contributes to the chlorophyll a binding site. A helical transmembrane segment spans residues 125–141; the sequence is GFMLRQFELARSVQLRP. Pheophytin a is bound by residues glutamine 130 and asparagine 143. The helical transmembrane segment at 153–166 threads the bilayer; it reads VFVSVFLIYPLGQS. Residue histidine 198 coordinates chlorophyll a. The chain crosses the membrane as a helical span at residues 208-228; sequence AALLCAIHGATVENTLFEDGD. Residues histidine 215 and phenylalanine 262 each coordinate a plastoquinone. Residue histidine 215 participates in Fe cation binding. Histidine 269 contacts Fe cation. A helical transmembrane segment spans residues 279–295; it reads GLWMSALGVVGLALNLR.

Belongs to the reaction center PufL/M/PsbA/D family. As to quaternary structure, PSII is composed of 1 copy each of membrane proteins PsbA, PsbB, PsbC, PsbD, PsbE, PsbF, PsbH, PsbI, PsbJ, PsbK, PsbL, PsbM, PsbT, PsbX, PsbY, PsbZ, Psb30/Ycf12, at least 3 peripheral proteins of the oxygen-evolving complex and a large number of cofactors. It forms dimeric complexes. The D1/D2 heterodimer binds P680, chlorophylls that are the primary electron donor of PSII, and subsequent electron acceptors. It shares a non-heme iron and each subunit binds pheophytin, quinone, additional chlorophylls, carotenoids and lipids. There is also a Cl(-1) ion associated with D1 and D2, which is required for oxygen evolution. The PSII complex binds additional chlorophylls, carotenoids and specific lipids. is required as a cofactor.

The protein localises to the plastid. The protein resides in the chloroplast thylakoid membrane. The enzyme catalyses 2 a plastoquinone + 4 hnu + 2 H2O = 2 a plastoquinol + O2. In terms of biological role, photosystem II (PSII) is a light-driven water:plastoquinone oxidoreductase that uses light energy to abstract electrons from H(2)O, generating O(2) and a proton gradient subsequently used for ATP formation. It consists of a core antenna complex that captures photons, and an electron transfer chain that converts photonic excitation into a charge separation. The D1/D2 (PsbA/PsbD) reaction center heterodimer binds P680, the primary electron donor of PSII as well as several subsequent electron acceptors. D2 is needed for assembly of a stable PSII complex. This chain is Photosystem II D2 protein, found in Chloranthus spicatus (Chulantree).